We begin with the raw amino-acid sequence, 167 residues long: MKIIAIAPRIGAAVLSLVAFSVMASTGERRSGAGSTFKVKFSDFQAYNYLIALNVILFVYSTVQLVMLVNSNHNSSFSSPFKWVLGVYICDQLLAFLLFSASSSAATASELSRHGLHNIWPPACATWKLWTFCSKAEAAVAMSFLSSFFIITSSILSGYHLSKVPAV.

Over 1–2 (MK) the chain is Cytoplasmic. A helical transmembrane segment spans residues 3 to 23 (IIAIAPRIGAAVLSLVAFSVM). The Extracellular portion of the chain corresponds to 24–48 (ASTGERRSGAGSTFKVKFSDFQAYN). Residues 49 to 69 (YLIALNVILFVYSTVQLVMLV) traverse the membrane as a helical segment. At 70-80 (NSNHNSSFSSP) the chain is on the cytoplasmic side. A helical transmembrane segment spans residues 81–101 (FKWVLGVYICDQLLAFLLFSA). Residues 102–137 (SSSAATASELSRHGLHNIWPPACATWKLWTFCSKAE) lie on the Extracellular side of the membrane. A helical membrane pass occupies residues 138 to 158 (AAVAMSFLSSFFIITSSILSG). The Cytoplasmic portion of the chain corresponds to 159–167 (YHLSKVPAV).

This sequence belongs to the Casparian strip membrane proteins (CASP) family. As to quaternary structure, homodimer and heterodimers.

The protein resides in the cell membrane. The chain is CASP-like protein 3 from Osmunda lancea (Fern).